The primary structure comprises 491 residues: Cobyric acid synthase (491 aa).

Residues 246–432 form the GATase cobBQ-type domain; the sequence is RKLIACPILP…VHGLLADAEL (187 aa). Catalysis depends on Cys-328, which acts as the Nucleophile. His-424 is a catalytic residue.

It belongs to the CobB/CobQ family. CobQ subfamily.

It participates in cofactor biosynthesis; adenosylcobalamin biosynthesis. In terms of biological role, catalyzes amidations at positions B, D, E, and G on adenosylcobyrinic A,C-diamide. NH(2) groups are provided by glutamine, and one molecule of ATP is hydrogenolyzed for each amidation. This Novosphingobium aromaticivorans (strain ATCC 700278 / DSM 12444 / CCUG 56034 / CIP 105152 / NBRC 16084 / F199) protein is Cobyric acid synthase.